Consider the following 99-residue polypeptide: Integration host factor subunit alpha (99 aa).

This sequence belongs to the bacterial histone-like protein family. In terms of assembly, heterodimer of an alpha and a beta chain.

Functionally, this protein is one of the two subunits of integration host factor, a specific DNA-binding protein that functions in genetic recombination as well as in transcriptional and translational control. The protein is Integration host factor subunit alpha of Psychrobacter arcticus (strain DSM 17307 / VKM B-2377 / 273-4).